Here is a 235-residue protein sequence, read N- to C-terminus: MTITLAELLESGVHFGHQARRWNPKMFPYIYAERNGIHIIDLVQTAQLLTEACEFVKKSAEEGKKFLFVGTKRQAASIIAQEAERCGAFYINQRWLGGILTNWFTIRTRVERLKDLELKEETGYLDKLPKKEAAGLRRELEKLKRNLNGIKNMKRLPDLVVIVDQKRETTAVQECRTLGIPIISILDTNCNPDLTDIAIPGNDDAIRSIKLIITKLTDSICEGSLGYDENNSDHE.

This sequence belongs to the universal ribosomal protein uS2 family.

The protein resides in the plastid. It localises to the chloroplast. The protein is Small ribosomal subunit protein uS2c (rps2) of Guillardia theta (Cryptophyte).